The primary structure comprises 1274 residues: Symplekin (1274 aa).

The segment at 1–124 (MASGSGDSVT…NMLLRDENVN (124 aa)) is interaction with HSF1. Serine 13 bears the Phosphoserine mark. 5 HEAT repeats span residues 31–64 (TTSERVVDLLNQAALITNDSKITVLKQVQELIIN), 67–101 (PTLLDNFLDEIIAFQADKSIEVRKFVIGFIEEACK), 104–146 (IELL…WMVK), 153–192 (LQEACWDMVSAMAGDIILLLDSDNDGIRTHAIKFVEGLIV), and 227–266 (VLWEEGKAALEQLLKFMVHPAISSINLTTALGSLANIARQ). The interval 335–392 (IARNMPSSKDTRKRPRDDSDSTLKKMKLEPNLGEDDEDKDLEPGPSGTSKASAQISGQ) is disordered. The Nuclear localization signal motif lies at 345–360 (TRKRPRDDSDSTLKKM). Residues 349–362 (PRDDSDSTLKKMKL) show a composition bias toward basic and acidic residues. A Glycyl lysine isopeptide (Lys-Gly) (interchain with G-Cter in SUMO1); alternate cross-link involves residue lysine 361. A Glycyl lysine isopeptide (Lys-Gly) (interchain with G-Cter in SUMO2); alternate cross-link involves residue lysine 361. Polar residues predominate over residues 380–392 (SGTSKASAQISGQ). Lysine 483 is covalently cross-linked (Glycyl lysine isopeptide (Lys-Gly) (interchain with G-Cter in SUMO2)). Serine 494 carries the post-translational modification Phosphoserine. Disordered stretches follow at residues 1102-1137 (GKQEPEAKEAPAGPLEEDDLEPLTLAPAPAPRPPQD) and 1149-1274 (LKRQ…KGNS). Over residues 1149–1159 (LKRQLEEEQKL) the composition is skewed to basic and acidic residues. A compositionally biased stretch (pro residues) spans 1173–1185 (SPSPSARPGPPPS). Phosphoserine is present on residues serine 1221 and serine 1222. Residue lysine 1239 forms a Glycyl lysine isopeptide (Lys-Gly) (interchain with G-Cter in SUMO1) linkage. Serine 1243 bears the Phosphoserine mark. Threonine 1257 carries the phosphothreonine modification. Serine 1259 carries the phosphoserine modification. The segment covering 1263 to 1274 (EDAREPEAKGNS) has biased composition (basic and acidic residues).

This sequence belongs to the Symplekin family. Found in a heat-sensitive complex at least composed of several cleavage and polyadenylation specific and cleavage stimulation factors. Interacts with CPSF2, CPSF3 and CSTF2. Interacts (via N-terminus) with HSF1; this interaction is direct and occurs upon heat shock. Interacts with SSU72. In terms of tissue distribution, in testis, expressed in polar epithelia and Sertoli cells but not in vascular endothelia. The protein is detected in stomach, duodenum, pancreas, liver, fetal brain, carcinomas, lens-forming cells, fibroblasts, lymphocytes, lymphoma cells, erythroleukemia cells but not in endothelium of vessels, epidermis, intercalated disks, Purkinje fiber cells of the heart and lymph node.

It localises to the cytoplasm. Its subcellular location is the cytoskeleton. The protein localises to the cell junction. The protein resides in the tight junction. It is found in the cell membrane. It localises to the nucleus. Its subcellular location is the nucleoplasm. Its function is as follows. Scaffold protein that functions as a component of a multimolecular complex involved in histone mRNA 3'-end processing. Specific component of the tight junction (TJ) plaque, but might not be an exclusively junctional component. May have a house-keeping rule. Is involved in pre-mRNA polyadenylation. Enhances SSU72 phosphatase activity. The polypeptide is Symplekin (SYMPK) (Homo sapiens (Human)).